We begin with the raw amino-acid sequence, 1247 residues long: F-box/WD repeat-containing protein A (1247 aa).

Positions 1–214 constitute an START domain; that stretch reads MQYVNGNDIS…PATVSGRLAK (214 aa). Disordered stretches follow at residues 484 to 514 and 552 to 576; these read GNKD…DNII and QQPQ…KEIK. The segment covering 552–566 has biased composition (low complexity); that stretch reads QQPQQQQQQPQEQQQ. Residues 631-677 enclose the F-box domain; it reads NSGFDNLPEEVVQIIFSNLSAINIVNLSLVCKRFKMATDSPILWKNL. 2 disordered regions span residues 697-744 and 833-856; these read SNLS…QQQQ and GQES…KRDN. 2 stretches are compositionally biased toward low complexity: residues 707-719 and 726-744; these read NSNS…GSSS and QQQN…QQQQ. Polar residues predominate over residues 833–846; it reads GQESPINKNSSDNP. WD repeat units follow at residues 895 to 934, 945 to 984, 988 to 1025, 1029 to 1073, 1076 to 1114, 1119 to 1158, and 1218 to 1247; these read GHNR…GDYE, DHTQ…IEVI, RPTN…LLWN, AHTK…CINT, GHSY…TFIS, KHTG…LSNI, and NHES…RWDF.

In terms of assembly, component of an SCF complex including at least culA. Formation of this complex appears to require activity of the MAP kinase erk2. Interacts with regA.

Its function is as follows. Substrate recognition component of a SCF (SKP1-CUL1-F-box protein) E3 ubiquitin-protein ligase complex which mediates the ubiquitination and subsequent proteasomal degradation of target proteins. May target the cAMP phosphodiesterase regA for degradation leading to an increase in cAMP and PKA activity. Promotes development of prestalk cells as opposed to prespores within the developing fruiting body. Required for culmination and fruiting body development. In Dictyostelium discoideum (Social amoeba), this protein is F-box/WD repeat-containing protein A (fbxA).